A 196-amino-acid chain; its full sequence is Peptidyl-tRNA hydrolase (196 aa).

Y17 contacts tRNA. H22 (proton acceptor) is an active-site residue. TRNA-binding residues include Y69, N71, and N117.

The protein belongs to the PTH family. As to quaternary structure, monomer.

The protein resides in the cytoplasm. It catalyses the reaction an N-acyl-L-alpha-aminoacyl-tRNA + H2O = an N-acyl-L-amino acid + a tRNA + H(+). Functionally, hydrolyzes ribosome-free peptidyl-tRNAs (with 1 or more amino acids incorporated), which drop off the ribosome during protein synthesis, or as a result of ribosome stalling. Its function is as follows. Catalyzes the release of premature peptidyl moieties from peptidyl-tRNA molecules trapped in stalled 50S ribosomal subunits, and thus maintains levels of free tRNAs and 50S ribosomes. This Pseudarthrobacter chlorophenolicus (strain ATCC 700700 / DSM 12829 / CIP 107037 / JCM 12360 / KCTC 9906 / NCIMB 13794 / A6) (Arthrobacter chlorophenolicus) protein is Peptidyl-tRNA hydrolase.